A 366-amino-acid polypeptide reads, in one-letter code: Patr class I histocompatibility antigen, C alpha chain (366 aa).

Residues 1-24 (MRVTAPRTLLLLLSGGLALTETWA) form the signal peptide. The tract at residues 25–114 (GSHSLRYFDT…LRGYYNQSED (90 aa)) is alpha-1. Residues 25-308 (GSHSLRYFDT…KPTSQPTIPI (284 aa)) are Extracellular-facing. The N-linked (GlcNAc...) asparagine glycan is linked to N110. The alpha-2 stretch occupies residues 115-206 (GSHTLQWMYG…ENGKETLQRT (92 aa)). Intrachain disulfides connect C125/C192 and C227/C283. The tract at residues 207–298 (ECPKTHMTHH…GLPEPLTLRW (92 aa)) is alpha-3. The 89-residue stretch at 209-297 (PKTHMTHHPV…EGLPEPLTLR (89 aa)) folds into the Ig-like C1-type domain. A connecting peptide region spans residues 299-308 (KPTSQPTIPI). A helical membrane pass occupies residues 309-332 (VGIVAGLAVLAVLAVLGAVVTAMM). At 333 to 366 (CRRKSSGGKGGSCSQAACSNSAQGSDESLIACKA) the chain is on the cytoplasmic side. Phosphoserine is present on residues S357 and S360.

The protein belongs to the MHC class I family. Heterodimer of an alpha chain and a beta chain (beta-2-microglobulin).

The protein resides in the membrane. Involved in the presentation of foreign antigens to the immune system. This is Patr class I histocompatibility antigen, C alpha chain from Pan troglodytes (Chimpanzee).